Here is a 404-residue protein sequence, read N- to C-terminus: Pyruvate-flavodoxin oxidoreductase (404 aa).

The protein belongs to the pyruvate:ferredoxin/flavodoxin oxidoreductase family.

It catalyses the reaction oxidized [flavodoxin] + pyruvate + CoA + 2 H(+) = reduced [flavodoxin] + acetyl-CoA + CO2. In terms of biological role, oxidoreductase required for the transfer of electrons from pyruvate to flavodoxin, which reduces nitrogenase. The polypeptide is Pyruvate-flavodoxin oxidoreductase (nifJ) (Nostoc sp. (strain ATCC 29151 / PCC 7119) (Anabaena sp.)).